A 902-amino-acid chain; its full sequence is Alanine--tRNA ligase (902 aa).

The Zn(2+) site is built by His-567, His-571, Cys-671, and His-675.

This sequence belongs to the class-II aminoacyl-tRNA synthetase family. The cofactor is Zn(2+).

It localises to the cytoplasm. It catalyses the reaction tRNA(Ala) + L-alanine + ATP = L-alanyl-tRNA(Ala) + AMP + diphosphate. Functionally, catalyzes the attachment of alanine to tRNA(Ala) in a two-step reaction: alanine is first activated by ATP to form Ala-AMP and then transferred to the acceptor end of tRNA(Ala). Also edits incorrectly charged Ser-tRNA(Ala) and Gly-tRNA(Ala) via its editing domain. In Mycoplasmoides gallisepticum (strain R(low / passage 15 / clone 2)) (Mycoplasma gallisepticum), this protein is Alanine--tRNA ligase.